We begin with the raw amino-acid sequence, 249 residues long: MRILISNDDGVNAPGLVALHAALADYADCVVIAPDQDKSGASSSLTLDRPLHPHTLENGFISVNGTPTDCVHLGIHGLLERQPDMVVSGINLGANLGDDVLYSGTVAAALEGRFLQRPSFAFSFLSRQPDNLATAAHYARLLVEAHEQLDLPPRTVLNVNIPNLPLEHIRGIQLTRLGHRARAAAPIRVVDPRGRAGYWIAAAGDVEDGGAGTDFHAVVQGYVSITPLQLDRTCQDGFSSLNTWLEGLR.

Positions 8, 9, 39, and 91 each coordinate a divalent metal cation.

Belongs to the SurE nucleotidase family. The cofactor is a divalent metal cation.

It is found in the cytoplasm. The enzyme catalyses a ribonucleoside 5'-phosphate + H2O = a ribonucleoside + phosphate. Functionally, nucleotidase that shows phosphatase activity on nucleoside 5'-monophosphates. The polypeptide is 5'-nucleotidase SurE (Pseudomonas syringae pv. syringae (strain B728a)).